Here is an 81-residue protein sequence, read N- to C-terminus: Large ribosomal subunit protein bL31B (81 aa).

Belongs to the bacterial ribosomal protein bL31 family. Type B subfamily. Part of the 50S ribosomal subunit.

This chain is Large ribosomal subunit protein bL31B, found in Oceanobacillus iheyensis (strain DSM 14371 / CIP 107618 / JCM 11309 / KCTC 3954 / HTE831).